A 431-amino-acid polypeptide reads, in one-letter code: UDP-N-acetylmuramoylalanine--D-glutamate ligase (431 aa).

111–117 (GTDGKST) is a binding site for ATP.

Belongs to the MurCDEF family.

The protein localises to the cytoplasm. It catalyses the reaction UDP-N-acetyl-alpha-D-muramoyl-L-alanine + D-glutamate + ATP = UDP-N-acetyl-alpha-D-muramoyl-L-alanyl-D-glutamate + ADP + phosphate + H(+). It participates in cell wall biogenesis; peptidoglycan biosynthesis. Cell wall formation. Catalyzes the addition of glutamate to the nucleotide precursor UDP-N-acetylmuramoyl-L-alanine (UMA). The protein is UDP-N-acetylmuramoylalanine--D-glutamate ligase of Petrotoga mobilis (strain DSM 10674 / SJ95).